A 49-amino-acid chain; its full sequence is Small integral membrane protein 27 (49 aa).

The helical transmembrane segment at 11 to 31 (WTYSLLLLAIVLLSWGFVIYA) threads the bilayer.

Its subcellular location is the membrane. This chain is Small integral membrane protein 27, found in Mus musculus (Mouse).